A 230-amino-acid chain; its full sequence is Putative 14-3-3-like protein GF14-H (230 aa).

It belongs to the 14-3-3 family.

In terms of biological role, is associated with a DNA binding complex that binds to the G box, a well-characterized cis-acting DNA regulatory element found in plant genes. This is Putative 14-3-3-like protein GF14-H (GF14H) from Oryza sativa subsp. japonica (Rice).